The chain runs to 196 residues: Holliday junction branch migration complex subunit RuvA (196 aa).

Residues 1–62 (MYEYINGLIT…ENDISLYGFI (62 aa)) form a domain I region. The segment at 63 to 141 (DADEKALFNK…ELASKTGMVD (79 aa)) is domain II. A flexible linker region spans residues 142–148 (SSSNPEQ). The interval 148–196 (QSQALDDALEALLALGYTAKDVKAVAQIIGRNSDTTDGYIRSALKLLVK) is domain III.

The protein belongs to the RuvA family. In terms of assembly, homotetramer. Forms an RuvA(8)-RuvB(12)-Holliday junction (HJ) complex. HJ DNA is sandwiched between 2 RuvA tetramers; dsDNA enters through RuvA and exits via RuvB. An RuvB hexamer assembles on each DNA strand where it exits the tetramer. Each RuvB hexamer is contacted by two RuvA subunits (via domain III) on 2 adjacent RuvB subunits; this complex drives branch migration. In the full resolvosome a probable DNA-RuvA(4)-RuvB(12)-RuvC(2) complex forms which resolves the HJ.

The protein resides in the cytoplasm. Functionally, the RuvA-RuvB-RuvC complex processes Holliday junction (HJ) DNA during genetic recombination and DNA repair, while the RuvA-RuvB complex plays an important role in the rescue of blocked DNA replication forks via replication fork reversal (RFR). RuvA specifically binds to HJ cruciform DNA, conferring on it an open structure. The RuvB hexamer acts as an ATP-dependent pump, pulling dsDNA into and through the RuvAB complex. HJ branch migration allows RuvC to scan DNA until it finds its consensus sequence, where it cleaves and resolves the cruciform DNA. This is Holliday junction branch migration complex subunit RuvA from Leuconostoc mesenteroides subsp. mesenteroides (strain ATCC 8293 / DSM 20343 / BCRC 11652 / CCM 1803 / JCM 6124 / NCDO 523 / NBRC 100496 / NCIMB 8023 / NCTC 12954 / NRRL B-1118 / 37Y).